The sequence spans 1262 residues: Protein stoned-B (1262 aa).

4 consecutive short sequence motifs (NPF) follow at residues 3–5, 19–21, 33–35, and 43–45; these read NPF. The segment at 17–36 is disordered; sequence AANPFLMQSEPEPSSDNPFM. The disordered stretch occupies residues 49-189; the sequence is ADDLELGAEP…DVSVDSGSSA (141 aa). Over residues 50-60 the composition is skewed to acidic residues; sequence DDLELGAEPEA. Over residues 101 to 111 the composition is skewed to low complexity; that stretch reads PPQSQPQLQSH. The span at 115–124 shows a compositional bias: pro residues; sequence HPPPPRPLVP. Residues 128-145 show a composition bias toward polar residues; the sequence is TQDLISTVSSQLDETSSE. Residues 172 to 189 show a composition bias toward low complexity; the sequence is DSGLADLLDVSVDSGSSA. The NPF 5 signature appears at 210–212; it reads NPF. Disordered regions lie at residues 225 to 452 and 474 to 507; these read VPLP…SPPT and EEMD…NFAP. Pro residues predominate over residues 233-272; it reads KQPPRPPPPRPAPPRPAPPGQAAPQRPPPPLAAVNPPPAA. The segment covering 325–345 has biased composition (acidic residues); sequence DLDETIGEGEPPEQEEPDTEQ. Residues 384 to 401 are compositionally biased toward polar residues; that stretch reads QVNNMAAPSGTASTQRAT. The segment covering 417-429 has biased composition (acidic residues); sequence DDEDEPEAMQEPE. Residues 493-495 carry the NPF 6 motif; the sequence is NPF. A phosphoserine mark is found at serine 623 and serine 626. The disordered stretch occupies residues 643–709; sequence SGVAPQLAPP…QDTPQTPLYD (67 aa). An NPF 7 motif is present at residues 673-675; sequence NPF. The SHD domain maps to 728 to 902; sequence GWEMQLRQPN…KIPALRERAL (175 aa). The segment at 847–1108 is interaction with Syt; the sequence is KEFGSDLKKL…KGIERILGAV (262 aa). The MHD domain maps to 906 to 1219; the sequence is MEEVQVTAVD…ARHEYKVGIE (314 aa). Residues 1226–1262 form a disordered region; it reads TNAYLAATRPIREEPPTTATKPTASPVAPSDSDTDSN. Low complexity predominate over residues 1241-1254; the sequence is PTTATKPTASPVAP.

Belongs to the Stoned B family. Interacts with the second C2 domain of Syt.

It localises to the cytoplasm. It is found in the synapse. Its function is as follows. Adapter protein involved in endocytic recycling of synaptic vesicles membranes. May act by mediating the retrieval of synaptotagmin protein Syt from the plasma membrane, thereby facilitating the internalization of multiple synaptic vesicles from the plasma membrane. This chain is Protein stoned-B (stnB), found in Drosophila melanogaster (Fruit fly).